Here is a 189-residue protein sequence, read N- to C-terminus: Cancer/testis antigen family 45 member A10 (189 aa).

This sequence belongs to the CT45 family.

It localises to the nucleus. The protein is Cancer/testis antigen family 45 member A10 of Homo sapiens (Human).